Consider the following 331-residue polypeptide: tRNA N6-adenosine threonylcarbamoyltransferase (331 aa).

Fe cation-binding residues include His109, His113, and Tyr130. Substrate is bound by residues 130 to 134 (YLSGG), Asp162, Asp183, and Ser262. Residue Asp290 participates in Fe cation binding.

The protein belongs to the KAE1 / TsaD family. Requires Fe(2+) as cofactor.

It localises to the cytoplasm. It carries out the reaction L-threonylcarbamoyladenylate + adenosine(37) in tRNA = N(6)-L-threonylcarbamoyladenosine(37) in tRNA + AMP + H(+). Functionally, required for the formation of a threonylcarbamoyl group on adenosine at position 37 (t(6)A37) in tRNAs that read codons beginning with adenine. Is probably involved in the transfer of the threonylcarbamoyl moiety of threonylcarbamoyl-AMP (TC-AMP) to the N6 group of A37. This Saccharolobus islandicus (strain M.16.27) (Sulfolobus islandicus) protein is tRNA N6-adenosine threonylcarbamoyltransferase.